Here is a 120-residue protein sequence, read N- to C-terminus: NAD(P)H-quinone oxidoreductase subunit 3, chloroplastic (120 aa).

Helical transmembrane passes span 3–23 (ILEG…IPVI), 64–84 (MFAL…PWAV), and 89–109 (LGLS…IGLV).

Belongs to the complex I subunit 3 family. In terms of assembly, NDH is composed of at least 16 different subunits, 5 of which are encoded in the nucleus.

Its subcellular location is the plastid. It is found in the chloroplast thylakoid membrane. The catalysed reaction is a plastoquinone + NADH + (n+1) H(+)(in) = a plastoquinol + NAD(+) + n H(+)(out). It carries out the reaction a plastoquinone + NADPH + (n+1) H(+)(in) = a plastoquinol + NADP(+) + n H(+)(out). Functionally, NDH shuttles electrons from NAD(P)H:plastoquinone, via FMN and iron-sulfur (Fe-S) centers, to quinones in the photosynthetic chain and possibly in a chloroplast respiratory chain. The immediate electron acceptor for the enzyme in this species is believed to be plastoquinone. Couples the redox reaction to proton translocation, and thus conserves the redox energy in a proton gradient. The chain is NAD(P)H-quinone oxidoreductase subunit 3, chloroplastic from Nephroselmis olivacea (Green alga).